The sequence spans 184 residues: Probable type 3 secretion system regulator AscH (184 aa).

The tract at residues 1-25 (MKIEGSDQLGGEQPQRQPLPPESMA) is disordered.

Belongs to the YopR family.

It is found in the secreted. Its function is as follows. May be involved in the regulation of the assembly of the type III secretion system (T3SS), also called injectisome, which is used to inject bacterial effector proteins into eukaryotic host cells. May control the polymerization of the needle. This is Probable type 3 secretion system regulator AscH from Aeromonas salmonicida subsp. salmonicida.